A 738-amino-acid polypeptide reads, in one-letter code: Transcription activator of gluconeogenesis SMAC_06113 (738 aa).

The disordered stretch occupies residues 1-65 (MPDDVGPAEA…KYDPKDPLRP (65 aa)). 2 stretches are compositionally biased toward basic and acidic residues: residues 28–39 (ATTKDDDEKMAE) and 51–64 (GDQKKKYDPKDPLR). Positions 74–102 (CYACQRAHLTCGDERPCQRCIKRGLAEAC) form a DNA-binding region, zn(2)-C6 fungal-type. Disordered stretches follow at residues 255-278 (SSGAAETPPRDPSISQQGTAGDVG), 328-404 (HAYA…KRQR), 530-579 (GTNS…KEQP), and 636-673 (SVPTTAGGSGSSNGTVVNGGPDSSPAGKTERERSTGAN). Composition is skewed to polar residues over residues 337–351 (TSLQSPSTENNSPQP) and 530–540 (GTNSDTLSVSS). Positions 475–546 (ALFEHEEFMH…SVSSKGGRGG (72 aa)) constitute a PAS domain. Composition is skewed to low complexity over residues 568–579 (QQQQSQQQKEQP) and 636–655 (SVPTTAGGSGSSNGTVVNGG).

It belongs to the ERT1/acuK family.

It localises to the nucleus. Functionally, transcription factor which regulates nonfermentable carbon utilization. Activator of gluconeogenetic genes. This is Transcription activator of gluconeogenesis SMAC_06113 from Sordaria macrospora (strain ATCC MYA-333 / DSM 997 / K(L3346) / K-hell).